The chain runs to 384 residues: Succinyl-diaminopimelate desuccinylase (384 aa).

His-72 lines the Zn(2+) pocket. Asp-74 is an active-site residue. Asp-105 contributes to the Zn(2+) binding site. Catalysis depends on Glu-139, which acts as the Proton acceptor. Residues Glu-140, Glu-168, and His-355 each contribute to the Zn(2+) site.

It belongs to the peptidase M20A family. DapE subfamily. Homodimer. It depends on Zn(2+) as a cofactor. Requires Co(2+) as cofactor.

It catalyses the reaction N-succinyl-(2S,6S)-2,6-diaminopimelate + H2O = (2S,6S)-2,6-diaminopimelate + succinate. The protein operates within amino-acid biosynthesis; L-lysine biosynthesis via DAP pathway; LL-2,6-diaminopimelate from (S)-tetrahydrodipicolinate (succinylase route): step 3/3. Its function is as follows. Catalyzes the hydrolysis of N-succinyl-L,L-diaminopimelic acid (SDAP), forming succinate and LL-2,6-diaminopimelate (DAP), an intermediate involved in the bacterial biosynthesis of lysine and meso-diaminopimelic acid, an essential component of bacterial cell walls. This Blochmanniella pennsylvanica (strain BPEN) protein is Succinyl-diaminopimelate desuccinylase.